We begin with the raw amino-acid sequence, 340 residues long: Arginine N-succinyltransferase subunit beta (340 aa).

Belongs to the succinylarginine dihydrolase family. As to quaternary structure, heterotetramer of two alpha and two beta subunits.

The catalysed reaction is succinyl-CoA + L-arginine = N(2)-succinyl-L-arginine + CoA + H(+). Its pathway is amino-acid degradation; L-arginine degradation via AST pathway; L-glutamate and succinate from L-arginine: step 1/5. The sequence is that of Arginine N-succinyltransferase subunit beta (aruG) from Pseudomonas aeruginosa (strain ATCC 15692 / DSM 22644 / CIP 104116 / JCM 14847 / LMG 12228 / 1C / PRS 101 / PAO1).